The chain runs to 297 residues: 4-hydroxy-tetrahydrodipicolinate synthase (297 aa).

Thr-49 serves as a coordination point for pyruvate. The Proton donor/acceptor role is filled by Tyr-137. Lys-165 serves as the catalytic Schiff-base intermediate with substrate. Ile-208 lines the pyruvate pocket.

The protein belongs to the DapA family. Homotetramer; dimer of dimers.

Its subcellular location is the cytoplasm. The catalysed reaction is L-aspartate 4-semialdehyde + pyruvate = (2S,4S)-4-hydroxy-2,3,4,5-tetrahydrodipicolinate + H2O + H(+). It functions in the pathway amino-acid biosynthesis; L-lysine biosynthesis via DAP pathway; (S)-tetrahydrodipicolinate from L-aspartate: step 3/4. Its function is as follows. Catalyzes the condensation of (S)-aspartate-beta-semialdehyde [(S)-ASA] and pyruvate to 4-hydroxy-tetrahydrodipicolinate (HTPA). This Gluconacetobacter diazotrophicus (strain ATCC 49037 / DSM 5601 / CCUG 37298 / CIP 103539 / LMG 7603 / PAl5) protein is 4-hydroxy-tetrahydrodipicolinate synthase.